A 124-amino-acid polypeptide reads, in one-letter code: Small ribosomal subunit protein uS12c (124 aa).

It belongs to the universal ribosomal protein uS12 family. In terms of assembly, part of the 30S ribosomal subunit.

It localises to the plastid. With S4 and S5 plays an important role in translational accuracy. Located at the interface of the 30S and 50S subunits. This is Small ribosomal subunit protein uS12c (rps12) from Helicosporidium sp. subsp. Simulium jonesii (Green alga).